The primary structure comprises 186 residues: MISTNDLRPGIIVDLDGTLYLIVTAQHVKPGKGSAFVRVKMKKLSDGSTIEQTFRAGEKVQRAYLETKQMQYLYSDGEHFVFMDTDTYEQVTLSGDIMSDVQQWLKEGMMVNVQFYQGKAVGIEVPTFVELEVVETEPGVRGDTAQGGSKPAKLETGAVVQVPLFITEGDIIRVDTRTGEYVERVG.

The protein belongs to the elongation factor P family.

It is found in the cytoplasm. Its pathway is protein biosynthesis; polypeptide chain elongation. In terms of biological role, involved in peptide bond synthesis. Stimulates efficient translation and peptide-bond synthesis on native or reconstituted 70S ribosomes in vitro. Probably functions indirectly by altering the affinity of the ribosome for aminoacyl-tRNA, thus increasing their reactivity as acceptors for peptidyl transferase. The chain is Elongation factor P from Coprothermobacter proteolyticus (strain ATCC 35245 / DSM 5265 / OCM 4 / BT).